The sequence spans 294 residues: Ribosomal protein L11 methyltransferase (294 aa).

4 residues coordinate S-adenosyl-L-methionine: threonine 146, glycine 167, aspartate 189, and asparagine 231.

Belongs to the methyltransferase superfamily. PrmA family.

The protein resides in the cytoplasm. It catalyses the reaction L-lysyl-[protein] + 3 S-adenosyl-L-methionine = N(6),N(6),N(6)-trimethyl-L-lysyl-[protein] + 3 S-adenosyl-L-homocysteine + 3 H(+). Functionally, methylates ribosomal protein L11. The chain is Ribosomal protein L11 methyltransferase from Aliivibrio fischeri (strain ATCC 700601 / ES114) (Vibrio fischeri).